The chain runs to 226 residues: Probable thiol methyltransferase 2 (226 aa).

Residues Trp-29, Trp-33, Trp-40, and Gly-67 each coordinate S-adenosyl-L-methionine. Residue Ser-79 is modified to Phosphoserine. S-adenosyl-L-methionine is bound by residues Asp-88, 116–117, and Tyr-132; that span reads DF.

The protein belongs to the class I-like SAM-binding methyltransferase superfamily. TPMT family.

The catalysed reaction is a thiol + S-adenosyl-L-methionine = a methyl thioether + S-adenosyl-L-homocysteine + H(+). Its function is as follows. S-adenosyl-L-methionine-dependent methyltransferase. The polypeptide is Probable thiol methyltransferase 2 (HOL3) (Arabidopsis thaliana (Mouse-ear cress)).